The primary structure comprises 426 residues: 6-Hydroxy-7-prenyldeoxybrevianamide E synthase notC' (426 aa).

Glu-94 provides a ligand contact to substrate. Positions 105, 191, and 193 each coordinate dimethylallyl diphosphate. Tyr-195 lines the substrate pocket. The dimethylallyl diphosphate site is built by Lys-267, Tyr-269, Gln-352, Tyr-354, Tyr-418, and Tyr-422.

Belongs to the tryptophan dimethylallyltransferase family.

The catalysed reaction is 6-hydroxydeoxybrevianamide E + dimethylallyl diphosphate = notoamide S + diphosphate. The protein operates within alkaloid biosynthesis. Its function is as follows. Prenyltransferase; part of the gene cluster that mediates the biosynthesis of notoamide, a fungal indole alkaloid that belongs to a family of natural products containing a characteristic bicyclo[2.2.2]diazaoctane core. The first step of notoamide biosynthesis involves coupling of L-proline and L-tryptophan by the bimodular NRPS notE', to produce cyclo-L-tryptophan-L-proline called brevianamide F. The reverse prenyltransferase notF' then acts as a deoxybrevianamide E synthase and converts brevianamide F to deoxybrevianamide E via reverse prenylation at C-2 of the indole ring leading to the bicyclo[2.2.2]diazaoctane core. Deoxybrevianamide E is further hydroxylated at C-6 of the indole ring, likely catalyzed by the cytochrome P450 monooxygenase notG', to yield 6-hydroxy-deoxybrevianamide E. 6-hydroxy-deoxybrevianamide E is a specific substrate of the prenyltransferase notC' for normal prenylation at C-7 to produce 6-hydroxy-7-prenyl-deoxybrevianamide, also called notoamide S. As the proposed pivotal branching point in notoamide biosynthesis, notoamide S can be diverted to notoamide E through an oxidative pyran ring closure putatively catalyzed by either notH' cytochrome P450 monooxygenase or the notD' FAD-linked oxidoreductase. This step would be followed by an indole 2,3-epoxidation-initiated pinacol-like rearrangement catalyzed by the notB' FAD-dependent monooxygenase leading to the formation of notoamide C and notoamide D. On the other hand notoamide S is converted to notoamide T by notH' (or notD'), a bifunctional oxidase that also functions as the intramolecular Diels-Alderase responsible for generation of (-)-notoamide T. To generate antipodal (+)-notoaminide T, notH (or notD) in Aspergillus strain MF297-2 is expected to catalyze a Diels-Alder reaction leading to the opposite stereochemistry. The remaining oxidoreductase notD' (or notH') likely catalyzes the oxidative pyran ring formation to yield (-)-stephacidin A. The FAD-dependent monooxygenase notI' is highly similar to notB' and is predicted to catalyze a similar conversion from (-)-stephacidin A to (+)-notoamide B via the 2,3-epoxidation of (-)-stephacidin A followed by a pinacol-type rearrangement. Finally, it remains unclear which enzyme could be responsible for the final hydroxylation steps leading to notoamide A and sclerotiamide. This Aspergillus versicolor protein is 6-Hydroxy-7-prenyldeoxybrevianamide E synthase notC'.